We begin with the raw amino-acid sequence, 362 residues long: Porin Omp2b (362 aa).

A signal peptide spans 1 to 22; it reads MNIKSLLLGSAAALVAASGAQA.

Belongs to the alphaproteobacteria porin family. In terms of assembly, homotrimer.

The protein localises to the cell outer membrane. Forms passive diffusion pores that allow small molecular weight hydrophilic materials across the outer membrane. This is Porin Omp2b (omp2b) from Brucella suis biovar 1 (strain 1330).